We begin with the raw amino-acid sequence, 465 residues long: Respiratory transcription factor ZNF1 (465 aa).

Positions 8-34 form a DNA-binding region, zn(2)-C6 fungal-type; the sequence is CDCCCIRRVKCDRKKPCKCCLQHNLQC.

Belongs to the MAL13 family.

The protein resides in the nucleus. Functionally, transcription factor that regulates respiratory growth and plays a critical role in stress adaptation during non-fermentative growth. Binds to promoters of genes involved in non-fermentative metabolism, including processes such as gluconeogenesis (PCK1, FBP1 and MDH2), glyoxylate shunt (MLS1 and ICL1) and the tricarboxylic acid cycle (ACO1). Plays a role in maintaining mitochondrial morphology and function. Also plays a role in tolerance to pH and osmotic stress, especially during the oxidative metabolism. The sequence is that of Respiratory transcription factor ZNF1 from Saccharomyces cerevisiae (strain ATCC 204508 / S288c) (Baker's yeast).